A 633-amino-acid polypeptide reads, in one-letter code: 1-deoxy-D-xylulose-5-phosphate synthase (633 aa).

Residues 1–22 (MPTTFHEIPRKRPTTPLLDRAQ) form a disordered region. Residues H87 and 128-130 (GHS) each bind thiamine diphosphate. Residue D159 coordinates Mg(2+). Residues 160 to 161 (GA), N188, F295, and E378 contribute to the thiamine diphosphate site. N188 lines the Mg(2+) pocket.

The protein belongs to the transketolase family. DXPS subfamily. As to quaternary structure, homodimer. Mg(2+) is required as a cofactor. The cofactor is thiamine diphosphate.

The enzyme catalyses D-glyceraldehyde 3-phosphate + pyruvate + H(+) = 1-deoxy-D-xylulose 5-phosphate + CO2. Its pathway is metabolic intermediate biosynthesis; 1-deoxy-D-xylulose 5-phosphate biosynthesis; 1-deoxy-D-xylulose 5-phosphate from D-glyceraldehyde 3-phosphate and pyruvate: step 1/1. Functionally, catalyzes the acyloin condensation reaction between C atoms 2 and 3 of pyruvate and glyceraldehyde 3-phosphate to yield 1-deoxy-D-xylulose-5-phosphate (DXP). The polypeptide is 1-deoxy-D-xylulose-5-phosphate synthase (Pseudomonas fluorescens (strain ATCC BAA-477 / NRRL B-23932 / Pf-5)).